A 167-amino-acid chain; its full sequence is S-ribosylhomocysteine lyase (167 aa).

Residues H54, H58, and C128 each coordinate Fe cation.

It belongs to the LuxS family. Homodimer. Fe cation serves as cofactor.

The enzyme catalyses S-(5-deoxy-D-ribos-5-yl)-L-homocysteine = (S)-4,5-dihydroxypentane-2,3-dione + L-homocysteine. Its function is as follows. Involved in the synthesis of autoinducer 2 (AI-2) which is secreted by bacteria and is used to communicate both the cell density and the metabolic potential of the environment. The regulation of gene expression in response to changes in cell density is called quorum sensing. Catalyzes the transformation of S-ribosylhomocysteine (RHC) to homocysteine (HC) and 4,5-dihydroxy-2,3-pentadione (DPD). The chain is S-ribosylhomocysteine lyase from Sulfurimonas denitrificans (strain ATCC 33889 / DSM 1251) (Thiomicrospira denitrificans (strain ATCC 33889 / DSM 1251)).